Consider the following 439-residue polypeptide: MTTYFDKIEKISFEGEKSTNPFAFKHYDANQVILGKTMAEHLRLAVCYWHTFCWNGNDMFGLGSLERSWQKNSNLLAGAEQKADIAFEFLNKLGVPYYCFHDVDIAPEGNSVREYVQNFHHIVDILERKQVETGVKLLWGTANCFTNPRYMSGAATNPNPEVFAWAATQVFNAMNATQRLGGENYVLWGGREGYETLLNTDLKREREQIGRFMQMVVEHKHKIGFKGTLLIEPKPQEPTKHQYDYDVATVYGFLKQFGLEKEIKVNIEANHATLAGHTFQHEIATACALDIFGSIDANRGDPQLGWDTDQFPNSVEENTLVMYEILKHGGFTTGGFNFDAKIRRQSIDPYDLFYAHIGAIDVLALSLKRAAKMLQEETLQKIVNERYAGWNSELGQHILQGKTSLETLAQLVQQKDLAPKPVSGQQEYLENLVNQVIYS.

Residues histidine 101 and aspartate 104 contribute to the active site. Residues glutamate 232, glutamate 268, histidine 271, aspartate 296, aspartate 307, aspartate 309, and aspartate 339 each contribute to the Mg(2+) site.

Belongs to the xylose isomerase family. In terms of assembly, homotetramer. Mg(2+) serves as cofactor.

Its subcellular location is the cytoplasm. The catalysed reaction is alpha-D-xylose = alpha-D-xylulofuranose. The polypeptide is Xylose isomerase (Haemophilus influenzae (strain PittEE)).